Consider the following 293-residue polypeptide: uncharacterized protein (293 aa).

2 disordered regions span residues 1 to 23 (MGWP…AQTD) and 52 to 83 (ELQS…SELS). Residues 8-17 (KPEDSKEEHG) are compositionally biased toward basic and acidic residues. Positions 52-71 (ELQSYSHTSESPVETKTPTT) are enriched in polar residues.

This is an uncharacterized protein from Mus musculus (Mouse).